The primary structure comprises 214 residues: Ribonuclease S-2 (214 aa).

The N-terminal stretch at 1 to 22 is a signal peptide; that stretch reads MSKSQLTSVFFILLCALSPIYG. Cys38 and Cys43 are oxidised to a cystine. The N-linked (GlcNAc...) asparagine glycan is linked to Asn49. Catalysis depends on His53, which acts as the Proton donor. His53 serves as a coordination point for RNA. A glycan (N-linked (GlcNAc...) asparagine) is linked at Asn59. Residues Cys67 and Cys116 are joined by a disulfide bond. Residues 91–92, Lys94, and Phe105 contribute to the RNA site; that span reads DL. The active site involves Glu109. Residue 112 to 113 participates in RNA binding; that stretch reads KH. His113 serves as the catalytic Proton acceptor. Asn160 carries an N-linked (GlcNAc...) asparagine glycan. Disulfide bonds link Cys175–Cys204 and Cys187–Cys198.

It belongs to the RNase T2 family.

The protein localises to the secreted. It localises to the extracellular space. It carries out the reaction a ribonucleotidyl-ribonucleotide-RNA + H2O = a 3'-end 3'-phospho-ribonucleotide-RNA + a 5'-end dephospho-ribonucleoside-RNA + H(+). Functionally, self-incompatibility (SI) is the inherited ability of a flowering plant to prevent self-fertilization by discriminating between self and non-self pollen during pollination. In many species of the Solanaceae, self-incompatibility is controlled by the single, multiallelic locus S. This stylar glycoprotein is associated with expression of self-incompatibility in potato. The protein is Ribonuclease S-2 (S-2) of Nicotiana alata (Winged tobacco).